We begin with the raw amino-acid sequence, 76 residues long: Liver-expressed antimicrobial peptide 2 (76 aa).

The N-terminal stretch at 1–22 (MLQLKLFAVLLTCLLLLGQVNS) is a signal peptide. A propeptide spanning residues 23–36 (SPVPEVSSAKRSRR) is cleaved from the precursor. Intrachain disulfides connect Cys53-Cys64 and Cys59-Cys69.

This sequence belongs to the LEAP2 family.

Its subcellular location is the secreted. Has an antimicrobial activity. The chain is Liver-expressed antimicrobial peptide 2 (Leap2) from Mus musculus (Mouse).